A 623-amino-acid polypeptide reads, in one-letter code: MAWGCFVVLLLLAAAPLRLGQRLHLEPGFEYSYDCGVRGMQLLVFPRPNQTVQFKVLDEFGNRFEVNNCSICYHWVTSEAQEHTVFSADYKGCHVLEKDGRFHLRVFIQAVLPNGRVDIAQDVTLICPKPDHTVTPDPYLAPPTTPEPFTPHAFALHPIPDHTLAGSGHTGLTTLYPEQSFIHPTPAPPSLGPGPAGSTVPHSQWGTLEPWELTELDSVGTHLPQERCQVASGHIPCMVNGSSKETCQQAGCCYDSTKEEPCYYGNTVTLQCFKSGYFTLVMSQETALTHGVLLDNVHLAYAPNGCPPTQKTSAFVVFHVPLTLCGTAIQVVGEQLIYENQLVSDIDVQKGPQGSITRDSAFRLHVRCIFNASDFLPIQASIFSPQPPAPVTQSGPLRLELRIATDKTFSSYYQGSDYPLVRLLREPVYVEVRLLQRTDPSLVLVLHQCWATPTTSPFEQPQWPILSDGCPFKGDNYRTQVVAADREALPFWSHYQRFTITTFMLLDSSSQNALRGQVYFFCSASACHPLGSDTCSTTCDSGIARRRRSSGHHNITLRALDIVSSPGAVGFEDAAKLEPSGSSRNSSSRMLLLLLAITLALAAGIFVGLIWAWAQKLWEGIRY.

The N-terminal stretch at 1 to 20 (MAWGCFVVLLLLAAAPLRLG) is a signal peptide. Gln21 carries the pyrrolidone carboxylic acid modification. Topologically, residues 21 to 590 (QRLHLEPGFE…GSSRNSSSRM (570 aa)) are extracellular. Asn49 and Asn68 each carry an N-linked (GlcNAc...) asparagine glycan. The disordered stretch occupies residues 182-201 (IHPTPAPPSLGPGPAGSTVP). In terms of domain architecture, P-type spans 226–266 (ERCQVASGHIPCMVNGSSKETCQQAGCCYDSTKEEPCYYGN). Cystine bridges form between Cys228–Cys253, Cys237–Cys252, and Cys247–Cys262. N-linked (GlcNAc...) asparagine glycosylation is present at Asn240. The ZP domain maps to 271-542 (QCFKSGYFTL…DTCSTTCDSG (272 aa)). Asn371 is a glycosylation site (N-linked (GlcNAc...) asparagine). A disulfide bridge links Cys449 with Cys470. Residues 547–623 (RRSSGHHNIT…AQKLWEGIRY (77 aa)) constitute a propeptide, removed in mature form. N-linked (GlcNAc...) asparagine glycosylation is found at Asn554 and Asn585. Residues 591–611 (LLLLLAITLALAAGIFVGLIW) traverse the membrane as a helical segment. At 612–623 (AWAQKLWEGIRY) the chain is on the cytoplasmic side.

This sequence belongs to the ZP domain family. ZPB subfamily. Polymers of ZP2 and ZP3 organized into long filaments cross-linked by ZP1 homodimers. Interacts with ZP3. In terms of processing, proteolytically cleaved before the transmembrane segment to yield the secreted ectodomain incorporated in the zona pellucida. O-glycosylated. In terms of tissue distribution, expressed in oocytes.

The protein resides in the zona pellucida. It localises to the cell membrane. Component of the zona pellucida, an extracellular matrix surrounding oocytes which mediates sperm binding, induction of the acrosome reaction and prevents post-fertilization polyspermy. The zona pellucida is composed of 3 to 4 glycoproteins, ZP1, ZP2, ZP3, and ZP4. ZP1 ensures the structural integrity of the zona pellucida. In Mus musculus (Mouse), this protein is Zona pellucida sperm-binding protein 1 (Zp1).